Here is a 213-residue protein sequence, read N- to C-terminus: Thiamine import ATP-binding protein ThiQ (213 aa).

The 212-residue stretch at 1 to 212 (MIELNVTFDY…EQGRIVADQL (212 aa)) folds into the ABC transporter domain. Residue 31–38 (GESGAGKS) coordinates ATP.

The protein belongs to the ABC transporter superfamily. Thiamine importer (TC 3.A.1.19.1) family. The complex is composed of two ATP-binding proteins (ThiQ), two transmembrane proteins (ThiP) and a solute-binding protein (ThiB).

Its subcellular location is the cell inner membrane. It carries out the reaction thiamine(out) + ATP + H2O = thiamine(in) + ADP + phosphate + H(+). In terms of biological role, part of the ABC transporter complex ThiBPQ involved in thiamine import. Responsible for energy coupling to the transport system. This is Thiamine import ATP-binding protein ThiQ from Haemophilus ducreyi (strain 35000HP / ATCC 700724).